A 145-amino-acid polypeptide reads, in one-letter code: 3-hydroxyacyl-[acyl-carrier-protein] dehydratase FabZ (145 aa).

Residue His49 is part of the active site.

The protein belongs to the thioester dehydratase family. FabZ subfamily.

The protein resides in the cytoplasm. The enzyme catalyses a (3R)-hydroxyacyl-[ACP] = a (2E)-enoyl-[ACP] + H2O. In terms of biological role, involved in unsaturated fatty acids biosynthesis. Catalyzes the dehydration of short chain beta-hydroxyacyl-ACPs and long chain saturated and unsaturated beta-hydroxyacyl-ACPs. The polypeptide is 3-hydroxyacyl-[acyl-carrier-protein] dehydratase FabZ (Rickettsia africae (strain ESF-5)).